A 269-amino-acid chain; its full sequence is 4-hydroxy-tetrahydrodipicolinate reductase (269 aa).

Residues 8–13 (GVAGRM), 98–100 (GTT), and 122–125 (APNM) contribute to the NAD(+) site. The active-site Proton donor/acceptor is His156. His157 provides a ligand contact to (S)-2,3,4,5-tetrahydrodipicolinate. The Proton donor role is filled by Lys160. 166-167 (GT) contacts (S)-2,3,4,5-tetrahydrodipicolinate.

The protein belongs to the DapB family.

The protein resides in the cytoplasm. The catalysed reaction is (S)-2,3,4,5-tetrahydrodipicolinate + NAD(+) + H2O = (2S,4S)-4-hydroxy-2,3,4,5-tetrahydrodipicolinate + NADH + H(+). It catalyses the reaction (S)-2,3,4,5-tetrahydrodipicolinate + NADP(+) + H2O = (2S,4S)-4-hydroxy-2,3,4,5-tetrahydrodipicolinate + NADPH + H(+). The protein operates within amino-acid biosynthesis; L-lysine biosynthesis via DAP pathway; (S)-tetrahydrodipicolinate from L-aspartate: step 4/4. Catalyzes the conversion of 4-hydroxy-tetrahydrodipicolinate (HTPA) to tetrahydrodipicolinate. This Chromohalobacter salexigens (strain ATCC BAA-138 / DSM 3043 / CIP 106854 / NCIMB 13768 / 1H11) protein is 4-hydroxy-tetrahydrodipicolinate reductase.